Reading from the N-terminus, the 515-residue chain is FADH(2)-dependent monooxygenase TftD (515 aa).

Substrate is bound at residue 100–104 (RLPDA). FAD is bound by residues 151-153 (LNF), 157-160 (QTDR), and T192. 203–204 (GC) serves as a coordination point for substrate. 457–460 (TMTR) provides a ligand contact to FAD.

Belongs to the FADH(2)-utilizing monooxygenase family. As to quaternary structure, homotetramer. The chlorophenol-4-monooxygenase is composed of an oxygenase component TftD and a reductase component TftC.

It functions in the pathway xenobiotic degradation. In terms of biological role, oxygenase component of a two-component system that degrades 2,4,5-trichlorophenol. Uses FADH(2) supplied by TftC to oxidize 2,4,5-trichlorophenol (2,4,5-TCP) to 2,5-dichloro-p-benzoquinone, which is chemically reduced to 2,5-dichloro-p-hydroquinone (2,5-DiCHQ). Then, TftD oxidizes the latter to 5-chloro-2-hydroxy-p-benzoquinone. This chain is FADH(2)-dependent monooxygenase TftD (tftD), found in Burkholderia cepacia (Pseudomonas cepacia).